We begin with the raw amino-acid sequence, 967 residues long: Leucine-rich repeat receptor-like protein kinase PXC2 (967 aa).

The signal sequence occupies residues 1 to 20; that stretch reads MFNGAVSLLFLFLAVVSARA. At 21–609 the chain is on the extracellular side; the sequence is DPTFNDDVLG…QIRKSVLSIS (589 aa). LRR repeat units follow at residues 91–114, 115–139, 141–164, 165–189, 191–212, 214–236, 237–260, 262–284, 285–307, 308–332, and 334–356; these read LQFLHTLVLSNNNLTGTLNPEFPH, LGSLQVVDFSGNNLSGRIPDGFFEQ, GSLRSVSLANNKLTGSIPVSLSYC, STLTHLNLSSNQLSGRLPRDIWFLK, LKSLDFSHNFLQGDIPDGLGGL, DLRHINLSRNWFSGDVPSDIGRC, SSLKSLDLSENYFSGNLPDSMKSL, SCSSIRLRGNSLIGEIPDWIGDI, ATLEILDLSANNFTGTVPFSLGN, LEFLKDLNLSANMLAGELPQTLSNC, and NLISIDVSKNSFTGDVLKWMFTG. 2 N-linked (GlcNAc...) asparagine glycosylation sites follow: asparagine 103 and asparagine 127. Asparagine 171 carries N-linked (GlcNAc...) asparagine glycosylation. An N-linked (GlcNAc...) asparagine glycan is attached at asparagine 219. Residues asparagine 296, asparagine 315, and asparagine 331 are each glycosylated (N-linked (GlcNAc...) asparagine). N-linked (GlcNAc...) asparagine glycosylation is present at asparagine 374. LRR repeat units lie at residues 384–408, 410–432, 433–456, 457–480, 482–503, 504–528, and 530–552; these read LQGLRVLDLSSNGFTGELPSNIWIL, SLLQLNMSTNSLFGSIPTGIGGL, KVAEILDLSSNLLNGTLPSEIGGA, VSLKQLHLHRNRLSGQIPAKISNC, ALNTINLSENELSGAIPGSIGS, LSNLEYIDLSRNNLSGSLPKEIEKL, and HLLTFNISHNNITGELPAGGFFN. 9 N-linked (GlcNAc...) asparagine glycosylation sites follow: asparagine 415, asparagine 446, asparagine 479, asparagine 487, asparagine 516, asparagine 535, asparagine 540, asparagine 571, and asparagine 587. Residues 610–630 traverse the membrane as a helical segment; it reads ALIAIGAAAVIAIGVVAVTLL. Residues 631 to 967 lie on the Cytoplasmic side of the membrane; sequence NVHARSSVSR…LIQCPSHDLE (337 aa). Positions 687-959 constitute a Protein kinase domain; the sequence is LNKDSELGRG…EEVVKILELI (273 aa). ATP contacts are provided by residues 693–701 and lysine 715; that span reads LGRGGFGVV.

Belongs to the protein kinase superfamily. Ser/Thr protein kinase family. Expressed in the vascular strands of cotyledons, the shoot apex, hypocotyls, roots, leaves, stems and flowers.

The protein localises to the cell membrane. Functionally, leucine-rich repeat receptor-like protein kinase that may play a role in vascular tissues development. The sequence is that of Leucine-rich repeat receptor-like protein kinase PXC2 from Arabidopsis thaliana (Mouse-ear cress).